Consider the following 442-residue polypeptide: tRNA modification GTPase MnmE (442 aa).

(6S)-5-formyl-5,6,7,8-tetrahydrofolate contacts are provided by Arg-24, Glu-84, and Arg-124. A TrmE-type G domain is found at 218–366; sequence GARVALFGPV…LRDDMLGRLW (149 aa). GTP-binding positions include 228–233, 247–253, and 272–275; these read NAGKST, DDEPGTT, and DTAG. Mg(2+) contacts are provided by Ser-232 and Thr-253. Lys-442 is a binding site for (6S)-5-formyl-5,6,7,8-tetrahydrofolate.

The protein belongs to the TRAFAC class TrmE-Era-EngA-EngB-Septin-like GTPase superfamily. TrmE GTPase family. As to quaternary structure, homodimer. Heterotetramer of two MnmE and two MnmG subunits. The cofactor is K(+).

The protein resides in the cytoplasm. Exhibits a very high intrinsic GTPase hydrolysis rate. Involved in the addition of a carboxymethylaminomethyl (cmnm) group at the wobble position (U34) of certain tRNAs, forming tRNA-cmnm(5)s(2)U34. This chain is tRNA modification GTPase MnmE, found in Myxococcus xanthus (strain DK1622).